The following is a 237-amino-acid chain: uncharacterized protein (237 aa).

The N-terminal stretch at 1–28 is a signal peptide; it reads MVFSFSTFNRLVTFTVMAAIVSVRPLTA.

This is an uncharacterized protein from Sinorhizobium fredii (strain NBRC 101917 / NGR234).